A 236-amino-acid polypeptide reads, in one-letter code: Ubiquinone biosynthesis O-methyltransferase (236 aa).

S-adenosyl-L-methionine is bound by residues R39, G59, D80, and M124.

The protein belongs to the methyltransferase superfamily. UbiG/COQ3 family.

It catalyses the reaction a 3-demethylubiquinol + S-adenosyl-L-methionine = a ubiquinol + S-adenosyl-L-homocysteine + H(+). It carries out the reaction a 3-(all-trans-polyprenyl)benzene-1,2-diol + S-adenosyl-L-methionine = a 2-methoxy-6-(all-trans-polyprenyl)phenol + S-adenosyl-L-homocysteine + H(+). Its pathway is cofactor biosynthesis; ubiquinone biosynthesis. Its function is as follows. O-methyltransferase that catalyzes the 2 O-methylation steps in the ubiquinone biosynthetic pathway. The polypeptide is Ubiquinone biosynthesis O-methyltransferase (Shewanella sp. (strain MR-4)).